The sequence spans 748 residues: Cysteine--tRNA ligase, cytoplasmic (748 aa).

The tract at residues 1 to 25 is disordered; it reads MAGSSGQQGKGRRVQPQWSPPAGTQ. The residue at position 2 (Ala2) is an N-acetylalanine. Ser19 bears the Phosphoserine mark. Position 55 (Cys55) interacts with Zn(2+). Residue Gly56 coordinates L-cysteine. Positions 57–67 match the 'HIGH' region motif; it reads PTVYDASHMGH. Position 96 (Thr96) interacts with L-cysteine. The short motif at 101-104 is the 'KIIK' region element; the sequence is KIIK. 2 positions are modified to phosphoserine: Ser305 and Ser307. Zn(2+)-binding residues include Cys348, His373, and Glu377. Position 373 (His373) interacts with L-cysteine. Residues 406-410 carry the 'KMSKS' region motif; sequence KMSKS. Lys409 contributes to the ATP binding site. Composition is skewed to basic and acidic residues over residues 654-679 and 700-717; these read KRQV…EAAK and KFDE…KELS. 2 disordered regions span residues 654–686 and 700–721; these read KRQV…MKIP and KFDE…KGQA. Phosphoserine is present on Ser746.

As to quaternary structure, homodimer. Zn(2+) serves as cofactor.

It is found in the cytoplasm. It catalyses the reaction tRNA(Cys) + L-cysteine + ATP = L-cysteinyl-tRNA(Cys) + AMP + diphosphate. In terms of biological role, catalyzes the ATP-dependent ligation of cysteine to tRNA(Cys). In Macaca fascicularis (Crab-eating macaque), this protein is Cysteine--tRNA ligase, cytoplasmic (CARS1).